Consider the following 425-residue polypeptide: Glutamyl-tRNA reductase (425 aa).

Substrate contacts are provided by residues 49–52 (TCNR), S107, 112–114 (EPQ), and Q118. C50 (nucleophile) is an active-site residue. 187–192 (GAGETI) lines the NADP(+) pocket.

The protein belongs to the glutamyl-tRNA reductase family. In terms of assembly, homodimer.

The catalysed reaction is (S)-4-amino-5-oxopentanoate + tRNA(Glu) + NADP(+) = L-glutamyl-tRNA(Glu) + NADPH + H(+). It participates in porphyrin-containing compound metabolism; protoporphyrin-IX biosynthesis; 5-aminolevulinate from L-glutamyl-tRNA(Glu): step 1/2. In terms of biological role, catalyzes the NADPH-dependent reduction of glutamyl-tRNA(Glu) to glutamate 1-semialdehyde (GSA). The chain is Glutamyl-tRNA reductase from Pseudomonas syringae pv. tomato (strain ATCC BAA-871 / DC3000).